Reading from the N-terminus, the 249-residue chain is ATP synthase subunit a (249 aa).

6 consecutive transmembrane segments (helical) span residues A29–S49, F84–F104, I114–Y134, F140–I160, F193–I213, and V216–L236.

This sequence belongs to the ATPase A chain family. F-type ATPases have 2 components, CF(1) - the catalytic core - and CF(0) - the membrane proton channel. CF(1) has five subunits: alpha(3), beta(3), gamma(1), delta(1), epsilon(1). CF(0) has three main subunits: a(1), b(2) and c(9-12). The alpha and beta chains form an alternating ring which encloses part of the gamma chain. CF(1) is attached to CF(0) by a central stalk formed by the gamma and epsilon chains, while a peripheral stalk is formed by the delta and b chains.

It is found in the cell inner membrane. Key component of the proton channel; it plays a direct role in the translocation of protons across the membrane. The protein is ATP synthase subunit a of Agrobacterium fabrum (strain C58 / ATCC 33970) (Agrobacterium tumefaciens (strain C58)).